Consider the following 344-residue polypeptide: Sulfate/thiosulfate import ATP-binding protein CysA (344 aa).

An ABC transporter domain is found at 3–233 (ILIDNVSKNF…PESAFVMSFL (231 aa)). Position 35-42 (35-42 (GPSGCGKS)) interacts with ATP.

It belongs to the ABC transporter superfamily. Sulfate/tungstate importer (TC 3.A.1.6) family. As to quaternary structure, the complex is composed of two ATP-binding proteins (CysA), two transmembrane proteins (CysT and CysW) and a solute-binding protein (CysP).

The protein localises to the cell inner membrane. It catalyses the reaction sulfate(out) + ATP + H2O = sulfate(in) + ADP + phosphate + H(+). The enzyme catalyses thiosulfate(out) + ATP + H2O = thiosulfate(in) + ADP + phosphate + H(+). Part of the ABC transporter complex CysAWTP involved in sulfate/thiosulfate import. Responsible for energy coupling to the transport system. The protein is Sulfate/thiosulfate import ATP-binding protein CysA of Gloeobacter violaceus (strain ATCC 29082 / PCC 7421).